The following is a 505-amino-acid chain: Trans-cinnamate 4-monooxygenase (505 aa).

The chain crosses the membrane as a helical span at residues 3 to 23 (LLLLEKTLLALFIAATIAITI). (E)-cinnamate-binding positions include 212-217 (RSRLAQ) and Ala305. Position 446 (Cys446) interacts with heme.

Belongs to the cytochrome P450 family. The cofactor is heme.

It is found in the membrane. It carries out the reaction (E)-cinnamate + reduced [NADPH--hemoprotein reductase] + O2 = (E)-4-coumarate + oxidized [NADPH--hemoprotein reductase] + H2O + H(+). The protein operates within phenylpropanoid metabolism; trans-4-coumarate biosynthesis; trans-4-coumarate from trans-cinnamate: step 1/1. Catalyzes the first oxidative step of the phenylpropanoid pathway in higher plants by transforming trans-cinnamate into p-coumarate. The compounds formed by this pathway are essential components for lignification, pollination, and defense against ultraviolet light, predators and pathogens. In Cicer arietinum (Chickpea), this protein is Trans-cinnamate 4-monooxygenase (CYP73A19).